A 298-amino-acid polypeptide reads, in one-letter code: Elongation factor Ts (298 aa).

The segment at 80-83 (TDFV) is involved in Mg(2+) ion dislocation from EF-Tu.

Belongs to the EF-Ts family.

It is found in the cytoplasm. In terms of biological role, associates with the EF-Tu.GDP complex and induces the exchange of GDP to GTP. It remains bound to the aminoacyl-tRNA.EF-Tu.GTP complex up to the GTP hydrolysis stage on the ribosome. The sequence is that of Elongation factor Ts from Acidovorax sp. (strain JS42).